The following is a 73-amino-acid chain: Toxin Td12 (73 aa).

The signal sequence occupies residues 1–7; that stretch reads IGMVIEC. The region spanning 8–70 is the LCN-type CS-alpha/beta domain; it reads KDGYLMEPNG…TWDRATNTCG (63 aa). 4 disulfide bridges follow: Cys18/Cys69, Cys22/Cys44, Cys30/Cys50, and Cys34/Cys52. Arg71 is modified (arginine amide).

It belongs to the long (4 C-C) scorpion toxin superfamily. Sodium channel inhibitor family. Beta subfamily. Expressed by the venom gland.

Its subcellular location is the secreted. Its function is as follows. Beta toxins bind voltage-independently at site-4 of sodium channels (Nav) and shift the voltage of activation toward more negative potentials thereby affecting sodium channel activation and promoting spontaneous and repetitive firing. This chain is Toxin Td12, found in Tityus discrepans (Venezuelan scorpion).